The primary structure comprises 310 residues: Forkhead box protein pes-1 (310 aa).

Over residues 1 to 16 the composition is skewed to polar residues; it reads MLPLSISTSPDPASQF. Disordered regions lie at residues 1-37, 58-77, 92-126, and 217-242; these read MLPL…GTAK, VSPS…SPAP, KQSS…SNPN, and SLRR…PNPI. The span at 17–35 shows a compositional bias: low complexity; it reads PTVPDLPTLTPTPSPTSGT. A DNA-binding region (fork-head) is located at residues 128 to 220; it reads RPAYSYNALI…IGKDCGSLRR (93 aa). The span at 218-231 shows a compositional bias: basic residues; sequence LRRKKNGKPRKYSK.

It is found in the nucleus. The protein resides in the cytoplasm. Functionally, transcription factor. Plays a role in embryogenesis and later development, perhaps acting redundantly with forkhead protein fkh-2. This is Forkhead box protein pes-1 from Caenorhabditis briggsae.